The following is a 758-amino-acid chain: Microtubule-associated protein tau (758 aa).

Over residues 1–26 the composition is skewed to basic and acidic residues; that stretch reads MAEPRQEFEVMEDHAGTYGLGDRKDQ. The disordered stretch occupies residues 1–573; sequence MAEPRQEFEV…PVPMPDLKNV (573 aa). An N-acetylalanine modification is found at alanine 2. Phosphotyrosine; by FYN is present on tyrosine 18. Tyrosine 29 carries the phosphotyrosine modification. Lysine 44 is covalently cross-linked (Glycyl lysine isopeptide (Lys-Gly) (interchain with G-Cter in ubiquitin)). Phosphoserine occurs at positions 46 and 61. A compositionally biased stretch (polar residues) spans 61 to 71; the sequence is SETSDAKSTPT. Residues threonine 69 and threonine 71 each carry the phosphothreonine modification. Residue lysine 87 is glycosylated (N-linked (Glc) (glycation) lysine; in PHF-tau; in vitro). Threonine 111 carries the phosphothreonine modification. Basic and acidic residues-rich tracts occupy residues 179-189 and 207-216; these read EGGRHAPELLK and GGKERPGSKE. Serine 214 carries the phosphoserine; by SGK1 modification. Over residues 217-228 the composition is skewed to acidic residues; the sequence is EVDEDRDVDESS. The segment covering 314 to 323 has biased composition (basic and acidic residues); it reads EQAHSEEHLG. Positions 324–340 are enriched in low complexity; it reads RAAFPGAPGEGPEARGP. 2 stretches are compositionally biased toward basic and acidic residues: residues 344–356 and 381–393; these read EDTKEADLPEPSE and KSKDGTGSDDKKA. Lysine 383 carries N-linked (Glc) (glycation) lysine; in PHF-tau; in vitro glycosylation. A compositionally biased stretch (low complexity) spans 442 to 453; the sequence is VSSVTSRTGSSG. Residues 455 to 466 show a composition bias toward basic and acidic residues; it reads KEMKLKGADGKT. An N-linked (Glc) (glycation) lysine; in PHF-tau; in vitro glycan is attached at lysine 467. Threonine 470 is modified (phosphothreonine; by PDPK1). Arginine 472 carries the omega-N-methylarginine modification. Lysine 480 carries N-linked (Glc) (glycation) lysine; in PHF-tau; in vitro glycosylation. At lysine 480 the chain carries N6,N6-dimethyllysine; alternate. Lysine 480 is modified (N6-acetyllysine; alternate). Asparagine 484 carries the post-translational modification Deamidated asparagine; in tau and PHF-tau; partial. Residue threonine 486 is modified to Phosphothreonine. Lysine 491 is a glycosylation site (N-linked (Glc) (glycation) lysine; in PHF-tau; in vitro). Residues 491-503 are compositionally biased toward pro residues; it reads KTPPAPKTPPSSG. Threonine 492 carries the post-translational modification Phosphothreonine. At threonine 498 the chain carries Phosphothreonine; by PDPK1. A phosphoserine mark is found at serine 502, serine 508, and serine 512. Residues 504-531 are compositionally biased toward low complexity; sequence EPPKSGDRSGYSSPGSPGTPGSRSRTPS. Tyrosine 514 is subject to Phosphotyrosine; by TTBK1. 2 positions are modified to phosphoserine; by PDPK1 and TTBK1: serine 515 and serine 516. Position 519 is a phosphoserine; by CK1, PDPK1 and TTBK1 (serine 519). Threonine 522 carries the post-translational modification Phosphothreonine; by CK1 and PDPK1. Serine 525 carries O-linked (GlcNAc) serine glycosylation. A Phosphothreonine; by BRSK1, BRSK2, DYRK2 and PDPK1 modification is found at threonine 529. Serine 531 carries the phosphoserine; by PKA modification. The residue at position 534 (threonine 534) is a Phosphothreonine; by PDPK1. Residue lysine 542 is glycosylated (N-linked (Glc) (glycation) lysine; in PHF-tau; in vitro). Lysine 542 is modified (N6-acetyllysine). Residue threonine 548 is modified to Phosphothreonine; by GSK3-beta and PDPK1. An N-linked (Glc) (glycation) lysine; in PHF-tau; in vitro glycan is attached at lysine 551. Serine 552 bears the Phosphoserine; by PDPK1 mark. Phosphoserine; by PHK is present on serine 554. An O-linked (GlcNAc) serine glycan is attached at serine 555. Tau/MAP repeat units follow at residues 561–591, 592–622, 623–653, and 654–685; these read QTAPVPMPDLKNVKSKIGSTENLKHQPGGGK, VQIINKKLDLSNVQSKCGSKDNIKHVPGGGS, VQIVYKPVDLSKVTSKCGSLGNIHHKPGGGQ, and VEVKSEKLDFKDRVQSKIGSLDNITHVPGGGN. The microtubule-binding domain stretch occupies residues 561–685; sequence QTAPVPMPDL…NITHVPGGGN (125 aa). Lysine 571 is covalently cross-linked (Glycyl lysine isopeptide (Lys-Gly) (interchain with G-Cter in ubiquitin); in PHF-tau). A glycan (N-linked (Glc) (glycation) lysine; in PHF-tau; in vitro) is linked at lysine 576. Lysine 576 is modified (N6-acetyllysine; alternate). Residue lysine 576 is modified to N6-methyllysine; alternate. Lysine 576 participates in a covalent cross-link: Glycyl lysine isopeptide (Lys-Gly) (interchain with G-Cter in ubiquitin); alternate. Serine 579 is modified (phosphoserine; by MARK1, MARK2, MARK3, MARK4, BRSK1, BRSK2 and PHK). Lysine 584 is covalently cross-linked (Glycyl lysine isopeptide (Lys-Gly) (interchain with G-Cter in ubiquitin)). At asparagine 596 the chain carries Deamidated asparagine; in tau and PHF-tau; partial. Lysine 597 and lysine 598 each carry an N-linked (Glc) (glycation) lysine; in PHF-tau; in vitro glycan. Position 598 is an N6-acetyllysine; alternate (lysine 598). Residue lysine 598 forms a Glycyl lysine isopeptide (Lys-Gly) (interchain with G-Cter in ubiquitin); alternate linkage. Serine 602 carries the post-translational modification Phosphoserine; by PHK. An N6-acetyllysine modification is found at lysine 607. A disulfide bridge links cysteine 608 with cysteine 639. At serine 610 the chain carries Phosphoserine. Residue lysine 615 is modified to N6-acetyllysine; alternate. Lysine 615 is covalently cross-linked (Glycyl lysine isopeptide (Lys-Gly) (interchain with G-Cter in ubiquitin); alternate). Residue serine 622 is modified to Phosphoserine; by PHK. Lysine 628 carries the post-translational modification N6,N6-dimethyllysine; alternate. Residues lysine 628, lysine 634, and lysine 638 each carry the N6-acetyllysine; alternate modification. Lysine 628 is covalently cross-linked (Glycyl lysine isopeptide (Lys-Gly) (interchain with G-Cter in ubiquitin); in PHF-tau). Residues lysine 634 and lysine 638 each participate in a glycyl lysine isopeptide (Lys-Gly) (interchain with G-Cter in ubiquitin); alternate cross-link. Position 641 is a phosphoserine (serine 641). An N6-acetyllysine; alternate mark is found at lysine 648, lysine 660, and lysine 664. Glycyl lysine isopeptide (Lys-Gly) (interchain with G-Cter in ubiquitin); alternate cross-links involve residues lysine 648, lysine 660, and lysine 664. Lysine 664 is a glycosylation site (N-linked (Glc) (glycation) lysine; in PHF-tau; in vitro). An Omega-N-methylarginine modification is found at arginine 666. Serine 669 bears the Phosphoserine; by PHK mark. Residue lysine 670 is glycosylated (N-linked (Glc) (glycation) lysine; in PHF-tau; in vitro). Lysine 670 is covalently cross-linked (Glycyl lysine isopeptide (Lys-Gly) (interchain with G-Cter in ubiquitin); in PHF-tau). Serine 673 bears the Phosphoserine mark. N-linked (Glc) (glycation) lysine; in PHF-tau; in vitro glycosylation is present at lysine 686. Lysine 686 carries the post-translational modification N6-acetyllysine; alternate. A Glycyl lysine isopeptide (Lys-Gly) (interchain with G-Cter in ubiquitin); alternate cross-link involves residue lysine 686. Residue lysine 692 forms a Glycyl lysine isopeptide (Lys-Gly) (interchain with G-Cter in ubiquitin) linkage. Lysine 702 is subject to N6-acetyllysine; alternate. Lysine 702 participates in a covalent cross-link: Glycyl lysine isopeptide (Lys-Gly) (interchain with G-Cter in ubiquitin); alternate. At tyrosine 711 the chain carries Phosphotyrosine. Serine 713 is subject to Phosphoserine; by CK1 and PDPK1. Positions 715-734 are disordered; that stretch reads VVSGDTSPRHLSNVSSTGSI. Phosphoserine; alternate is present on serine 717. Residue serine 717 is glycosylated (O-linked (GlcNAc) serine; alternate). Residues 718 to 733 show a composition bias toward polar residues; that stretch reads GDTSPRHLSNVSSTGS. Position 720 is a phosphothreonine (threonine 720). Phosphoserine; by CK1 and PDPK1 is present on serine 721. Position 726 is a phosphoserine (serine 726). Serine 733 bears the Phosphoserine; by CaMK2 and TTBK1 mark. Position 739 is a phosphoserine; by PDPK1 and TTBK1 (serine 739). Threonine 744 bears the Phosphothreonine; by TTBK1 mark.

In terms of assembly, interacts with MARK1, MARK2, MARK3 and MARK4. Interacts with PSMC2 through SQSTM1. Interacts with SQSTM1 when polyubiquitinated. Interacts with FKBP4. Binds to CSNK1D. Interacts with SGK1. Interacts with EPM2A; the interaction dephosphorylates MAPT at Ser-396. Interacts with PIN1. Interacts with LRRK2. Interacts with LRP1, leading to endocytosis; this interaction is reduced in the presence of LRPAP1/RAP. Phosphorylation at serine and threonine residues in S-P or T-P motifs by proline-directed protein kinases (PDPK1, CDK1, CDK5, GSK3, MAPK) (only 2-3 sites per protein in interphase, seven-fold increase in mitosis, and in the form associated with paired helical filaments (PHF-tau)), and at serine residues in K-X-G-S motifs by MAP/microtubule affinity-regulating kinase (MARK1, MARK2, MARK3 or MARK4), causing detachment from microtubules, and their disassembly. Phosphorylation decreases with age. Phosphorylation within tau/MAP's repeat domain or in flanking regions seems to reduce tau/MAP's interaction with, respectively, microtubules or plasma membrane components. Phosphorylation on Ser-610, Ser-622, Ser-641 and Ser-673 in several isoforms during mitosis. Phosphorylation at Ser-548 by GSK3B reduces ability to bind and stabilize microtubules. Phosphorylation at Ser-579 by BRSK1 and BRSK2 in neurons affects ability to bind microtubules and plays a role in neuron polarization. Phosphorylated at Ser-554, Ser-579, Ser-602, Ser-606 and Ser-669 by PHK. Phosphorylation at Ser-214 by SGK1 mediates microtubule depolymerization and neurite formation in hippocampal neurons. There is a reciprocal down-regulation of phosphorylation and O-GlcNAcylation. Phosphorylation on Ser-717 completely abolishes the O-GlcNAcylation on this site, while phosphorylation on Ser-713 and Ser-721 reduces glycosylation by a factor of 2 and 4 respectively. Phosphorylation on Ser-721 is reduced by about 41.5% by GlcNAcylation on Ser-717. Dephosphorylated at several serine and threonine residues by the serine/threonine phosphatase PPP5C. Post-translationally, polyubiquitinated. Requires functional TRAF6 and may provoke SQSTM1-dependent degradation by the proteasome. PHF-tau can be modified by three different forms of polyubiquitination. 'Lys-48'-linked polyubiquitination is the major form, 'Lys-6'-linked and 'Lys-11'-linked polyubiquitination also occur. In terms of processing, O-glycosylated. O-GlcNAcylation content is around 8.2%. There is reciprocal down-regulation of phosphorylation and O-GlcNAcylation. Phosphorylation on Ser-717 completely abolishes the O-GlcNAcylation on this site, while phosphorylation on Ser-713 and Ser-721 reduces O-GlcNAcylation by a factor of 2 and 4 respectively. O-GlcNAcylation on Ser-717 decreases the phosphorylation on Ser-721 by about 41.5%. Glycation of PHF-tau, but not normal brain TAU/MAPT. Glycation is a non-enzymatic post-translational modification that involves a covalent linkage between a sugar and an amino group of a protein molecule forming ketoamine. Subsequent oxidation, fragmentation and/or cross-linking of ketoamine leads to the production of advanced glycation endproducts (AGES). Glycation may play a role in stabilizing PHF aggregation leading to tangle formation in AD. As to expression, expressed in neurons. Isoform PNS-tau is expressed in the peripheral nervous system while the others are expressed in the central nervous system.

Its subcellular location is the cytoplasm. It localises to the cytosol. It is found in the cell membrane. The protein localises to the cytoskeleton. The protein resides in the cell projection. Its subcellular location is the axon. It localises to the dendrite. It is found in the secreted. Promotes microtubule assembly and stability, and might be involved in the establishment and maintenance of neuronal polarity. The C-terminus binds axonal microtubules while the N-terminus binds neural plasma membrane components, suggesting that tau functions as a linker protein between both. Axonal polarity is predetermined by TAU/MAPT localization (in the neuronal cell) in the domain of the cell body defined by the centrosome. The short isoforms allow plasticity of the cytoskeleton whereas the longer isoforms may preferentially play a role in its stabilization. This Homo sapiens (Human) protein is Microtubule-associated protein tau.